The following is a 262-amino-acid chain: Small ribosomal subunit protein eS4A (262 aa).

An S4 RNA-binding domain is found at 42-105 (LPLIVFLRNR…GEHFRLVYDI (64 aa)).

It belongs to the eukaryotic ribosomal protein eS4 family. In terms of assembly, component of the small ribosomal subunit (SSU). Mature yeast ribosomes consist of a small (40S) and a large (60S) subunit. The 40S small subunit contains 1 molecule of ribosomal RNA (18S rRNA) and at least 33 different proteins. The large 60S subunit contains 3 rRNA molecules (25S, 5.8S and 5S rRNA) and at least 46 different proteins.

It is found in the cytoplasm. Its function is as follows. Component of the ribosome, a large ribonucleoprotein complex responsible for the synthesis of proteins in the cell. The small ribosomal subunit (SSU) binds messenger RNAs (mRNAs) and translates the encoded message by selecting cognate aminoacyl-transfer RNA (tRNA) molecules. The large subunit (LSU) contains the ribosomal catalytic site termed the peptidyl transferase center (PTC), which catalyzes the formation of peptide bonds, thereby polymerizing the amino acids delivered by tRNAs into a polypeptide chain. The nascent polypeptides leave the ribosome through a tunnel in the LSU and interact with protein factors that function in enzymatic processing, targeting, and the membrane insertion of nascent chains at the exit of the ribosomal tunnel. The sequence is that of Small ribosomal subunit protein eS4A (rps401) from Schizosaccharomyces pombe (strain 972 / ATCC 24843) (Fission yeast).